Here is a 334-residue protein sequence, read N- to C-terminus: G-protein coupled receptor 12 (334 aa).

Residues 1–48 (MNEDLKVNLSGLPRDYLDAAAAENISAAVSSRVPAVEPEPELVVNPWD) are Extracellular-facing. N-linked (GlcNAc...) asparagine glycans are attached at residues Asn-8 and Asn-24. The chain crosses the membrane as a helical span at residues 49 to 69 (IVLCTSGTLISCENAIVVLII). The Cytoplasmic portion of the chain corresponds to 70–77 (FHNPSLRA). Residues 78–98 (PMFLLIGSLALADLLAGIGLI) traverse the membrane as a helical segment. Residues 99 to 113 (TNFVFAYLLQSEATK) are Extracellular-facing. Residues 114-134 (LVTIGLIVASFSASVCSLLAI) form a helical membrane-spanning segment. Residues 135–158 (TVDRYLSLYYALTYHSERTVTFTY) are Cytoplasmic-facing. The helical transmembrane segment at 159 to 179 (VMLVMLWGTSICLGLLPVMGW) threads the bilayer. Over 180–199 (NCLRDESTCSVVRPLTKNNA) the chain is Extracellular. Residues 200–220 (AILSVSFLFMFALMLQLYIQI) form a helical membrane-spanning segment. The Cytoplasmic segment spans residues 221 to 252 (CKIVMRHAHQIALQHHFLATSHYVTTRKGVST). A helical membrane pass occupies residues 253-273 (LAIILGTFAACWMPFTLYSLI). Residues 274-282 (ADYTYPSIY) are Extracellular-facing. A helical membrane pass occupies residues 283-303 (TYATLLPATYNSIINPVIYAF). Topologically, residues 304–334 (RNQEIQKALCLICCGCIPSSLAQRARSPSDV) are cytoplasmic. Cys-317 carries the S-palmitoyl cysteine lipid modification. 2 positions are modified to phosphoserine: Ser-330 and Ser-332.

This sequence belongs to the G-protein coupled receptor 1 family.

The protein localises to the cell membrane. Functionally, promotes neurite outgrowth and blocks myelin inhibition in neurons. Receptor with constitutive G(s) signaling activity that stimulates cyclic AMP production. The chain is G-protein coupled receptor 12 (GPR12) from Homo sapiens (Human).